A 466-amino-acid polypeptide reads, in one-letter code: Clusterin-like protein 1 (466 aa).

The signal sequence occupies residues 1–20 (MKPPLLVFIVCLLWLKDSHC). Positions 57–111 (KQMKIMMERKEKEHTNLMSTLKKCREEKQEALKLLNEVQEHLEEEERLCRESLAD) form a coiled coil. 5 disulfide bridges follow: cysteine 105-cysteine 333, cysteine 116-cysteine 325, cysteine 119-cysteine 322, cysteine 124-cysteine 315, and cysteine 131-cysteine 305. N-linked (GlcNAc...) asparagine glycosylation is found at asparagine 196, asparagine 257, asparagine 311, asparagine 351, asparagine 412, and asparagine 431.

It belongs to the clusterin family.

The protein localises to the secreted. The chain is Clusterin-like protein 1 (CLUL1) from Homo sapiens (Human).